The following is a 382-amino-acid chain: ATP phosphoribosyltransferase regulatory subunit (382 aa).

It belongs to the class-II aminoacyl-tRNA synthetase family. HisZ subfamily. Heteromultimer composed of HisG and HisZ subunits.

The protein resides in the cytoplasm. It functions in the pathway amino-acid biosynthesis; L-histidine biosynthesis; L-histidine from 5-phospho-alpha-D-ribose 1-diphosphate: step 1/9. In terms of biological role, required for the first step of histidine biosynthesis. May allow the feedback regulation of ATP phosphoribosyltransferase activity by histidine. This is ATP phosphoribosyltransferase regulatory subunit from Verminephrobacter eiseniae (strain EF01-2).